Reading from the N-terminus, the 460-residue chain is UDP-N-acetylmuramoyl-tripeptide--D-alanyl-D-alanine ligase (460 aa).

115-121 (GSSGKTS) is an ATP binding site.

The protein belongs to the MurCDEF family. MurF subfamily.

The protein localises to the cytoplasm. It carries out the reaction D-alanyl-D-alanine + UDP-N-acetyl-alpha-D-muramoyl-L-alanyl-gamma-D-glutamyl-meso-2,6-diaminopimelate + ATP = UDP-N-acetyl-alpha-D-muramoyl-L-alanyl-gamma-D-glutamyl-meso-2,6-diaminopimeloyl-D-alanyl-D-alanine + ADP + phosphate + H(+). The protein operates within cell wall biogenesis; peptidoglycan biosynthesis. Involved in cell wall formation. Catalyzes the final step in the synthesis of UDP-N-acetylmuramoyl-pentapeptide, the precursor of murein. The polypeptide is UDP-N-acetylmuramoyl-tripeptide--D-alanyl-D-alanine ligase (Buchnera aphidicola subsp. Baizongia pistaciae (strain Bp)).